Here is a 309-residue protein sequence, read N- to C-terminus: Glutaminase (309 aa).

Substrate is bound by residues Ser-64, Asn-114, Glu-160, Asn-167, Tyr-191, Tyr-243, and Val-261.

This sequence belongs to the glutaminase family. In terms of assembly, homotetramer.

It catalyses the reaction L-glutamine + H2O = L-glutamate + NH4(+). This chain is Glutaminase, found in Agrobacterium fabrum (strain C58 / ATCC 33970) (Agrobacterium tumefaciens (strain C58)).